The primary structure comprises 1244 residues: Actin cytoskeleton-regulatory complex protein SLA1 (1244 aa).

SH3 domains follow at residues 3 to 68 and 69 to 132; these read VFLG…IEEA and PVLK…PENG. Disordered stretches follow at residues 128 to 248 and 415 to 497; these read EPEN…GNHE and DKKH…PKKS. A compositionally biased stretch (low complexity) spans 140–159; sequence APAAAEAPAATPAAAPASAA. The segment covering 171 to 184 has biased composition (basic and acidic residues); that stretch reads HNDRARMMQSKEDQ. Positions 199-214 are enriched in low complexity; sequence ARPTATTETTDATAAA. Residues 226–235 show a composition bias toward acidic residues; that stretch reads NDNDDEEDDY. The 63-residue stretch at 353–415 folds into the SH3 3 domain; sequence KSKKRGIVQY…PAQFIEPVRD (63 aa). Positions 429-447 are enriched in basic residues; it reads SIKKNFTKSPSRSRSRSRS. Phosphoserine is present on residues serine 447, serine 449, and serine 454. Residues lysine 471 and lysine 548 each participate in a glycyl lysine isopeptide (Lys-Gly) (interchain with G-Cter in ubiquitin) cross-link. A compositionally biased stretch (basic residues) spans 471 to 484; sequence KRSRKSSLSSHKKN. Disordered stretches follow at residues 558–592, 610–649, and 726–791; these read KAND…RDRR, EERS…SNNN, and PTNA…NLLS. 2 stretches are compositionally biased toward basic and acidic residues: residues 568–592 and 610–621; these read TDSR…RDRR and EERSRLQEKELP. Positions 629-649 are enriched in low complexity; that stretch reads TSTTSVPNTTSVPPAESSNNN. Residues 726 to 756 show a composition bias toward polar residues; the sequence is PTNATGNMFSQPDGSLNVATSPETSLPQQLL. Over residues 757–771 the composition is skewed to low complexity; sequence PQTTSPAQTAPSTSA. Phosphoserine is present on serine 799. The disordered stretch occupies residues 813–853; it reads KAAASTPEPNLKDLEPVKTGGTTVPAAPVSSAPVSSAPAPL. Residue threonine 831 is modified to Phosphothreonine. Over residues 836 to 851 the composition is skewed to low complexity; it reads VPAAPVSSAPVSSAPA. Residue threonine 858 is modified to Phosphothreonine. A run of 3 repeats spans residues 868–874, 877–883, and 887–893. The segment at 868–1205 is 16 X 7 AA approximate repeats of T-G-G-A-M-M-P; the sequence is TGFVMMPMIT…NTFNTGGAMQ (338 aa). Phosphothreonine occurs at positions 887 and 904. Repeat copies occupy residues 923-929 and 945-951. Phosphothreonine is present on residues threonine 984 and threonine 993. Serine 996 carries the phosphoserine modification. 5 repeat units span residues 1003–1009, 1020–1026, 1031–1037, 1048–1054, and 1065–1071. Threonine 1075 is subject to Phosphothreonine. Repeat copies occupy residues 1084–1090, 1129–1135, 1155–1161, 1170–1176, 1185–1191, and 1200–1206.

It belongs to the SLA1 family. In terms of assembly, component of the PAN1 actin cytoskeleton-regulatory complex. Interacts with ABP1, KRE6, LAS17, LSB5, RSP5, RVS167, VPS1 and YSC84. Phosphorylated by PRK1.

It is found in the nucleus. Its subcellular location is the cell membrane. It localises to the endosome membrane. The protein localises to the cytoplasm. The protein resides in the cytoskeleton. It is found in the actin patch. Functionally, component of the PAN1 actin cytoskeleton-regulatory complex required for the internalization of endosomes during actin-coupled endocytosis. The complex links the site of endocytosis to the cell membrane-associated actin cytoskeleton. Mediates uptake of external molecules and vacuolar degradation of plasma membrane proteins. Plays a role in the proper organization of the cell membrane-associated actin cytoskeleton and promotes its destabilization. The polypeptide is Actin cytoskeleton-regulatory complex protein SLA1 (SLA1) (Saccharomyces cerevisiae (strain ATCC 204508 / S288c) (Baker's yeast)).